Reading from the N-terminus, the 438-residue chain is 3-phosphoshikimate 1-carboxyvinyltransferase (438 aa).

3-phosphoshikimate is bound by residues K26, S27, and R31. A phosphoenolpyruvate-binding site is contributed by K26. Residues G99 and R127 each coordinate phosphoenolpyruvate. 3-phosphoshikimate contacts are provided by S172, Q174, D320, and K347. Q174 contacts phosphoenolpyruvate. D320 serves as the catalytic Proton acceptor. Phosphoenolpyruvate-binding residues include R351 and R392.

Belongs to the EPSP synthase family. In terms of assembly, monomer.

It localises to the cytoplasm. The enzyme catalyses 3-phosphoshikimate + phosphoenolpyruvate = 5-O-(1-carboxyvinyl)-3-phosphoshikimate + phosphate. It participates in metabolic intermediate biosynthesis; chorismate biosynthesis; chorismate from D-erythrose 4-phosphate and phosphoenolpyruvate: step 6/7. Catalyzes the transfer of the enolpyruvyl moiety of phosphoenolpyruvate (PEP) to the 5-hydroxyl of shikimate-3-phosphate (S3P) to produce enolpyruvyl shikimate-3-phosphate and inorganic phosphate. This Xanthomonas campestris pv. campestris (strain 8004) protein is 3-phosphoshikimate 1-carboxyvinyltransferase.